A 242-amino-acid chain; its full sequence is Segregation and condensation protein A (242 aa).

The protein belongs to the ScpA family. Component of a cohesin-like complex composed of ScpA, ScpB and the Smc homodimer, in which ScpA and ScpB bind to the head domain of Smc. The presence of the three proteins is required for the association of the complex with DNA.

It localises to the cytoplasm. Its function is as follows. Participates in chromosomal partition during cell division. May act via the formation of a condensin-like complex containing Smc and ScpB that pull DNA away from mid-cell into both cell halves. The protein is Segregation and condensation protein A of Streptococcus pneumoniae serotype 4 (strain ATCC BAA-334 / TIGR4).